Consider the following 258-residue polypeptide: tRNA pseudouridine synthase A (258 aa).

Catalysis depends on Asp-52, which acts as the Nucleophile. A substrate-binding site is contributed by Tyr-110.

This sequence belongs to the tRNA pseudouridine synthase TruA family. As to quaternary structure, homodimer.

It catalyses the reaction uridine(38/39/40) in tRNA = pseudouridine(38/39/40) in tRNA. Functionally, formation of pseudouridine at positions 38, 39 and 40 in the anticodon stem and loop of transfer RNAs. The chain is tRNA pseudouridine synthase A from Francisella tularensis subsp. holarctica (strain LVS).